Reading from the N-terminus, the 602-residue chain is Probable translation initiation factor IF-2 (602 aa).

The 216-residue stretch at 15-230 folds into the tr-type G domain; that stretch reads LRTPIVAVLG…VLMGLSQRYL (216 aa). The interval 24 to 31 is G1; the sequence is GHVDHGKT. 24-31 contacts GTP; sequence GHVDHGKT. A G2 region spans residues 49-53; that stretch reads AITQH. Residues 86 to 89 are G3; the sequence is DTPG. Residues 86 to 90 and 140 to 143 contribute to the GTP site; these read DTPGH and NKID. The interval 140-143 is G4; that stretch reads NKID. The G5 stretch occupies residues 208–210; sequence SAE.

This sequence belongs to the TRAFAC class translation factor GTPase superfamily. Classic translation factor GTPase family. IF-2 subfamily.

Functionally, function in general translation initiation by promoting the binding of the formylmethionine-tRNA to ribosomes. Seems to function along with eIF-2. The sequence is that of Probable translation initiation factor IF-2 from Natronomonas pharaonis (strain ATCC 35678 / DSM 2160 / CIP 103997 / JCM 8858 / NBRC 14720 / NCIMB 2260 / Gabara) (Halobacterium pharaonis).